Consider the following 89-residue polypeptide: Co-chaperonin GroES (89 aa).

Belongs to the GroES chaperonin family. As to quaternary structure, heptamer of 7 subunits arranged in a ring. Interacts with the chaperonin GroEL.

The protein resides in the cytoplasm. Functionally, together with the chaperonin GroEL, plays an essential role in assisting protein folding. The GroEL-GroES system forms a nano-cage that allows encapsulation of the non-native substrate proteins and provides a physical environment optimized to promote and accelerate protein folding. GroES binds to the apical surface of the GroEL ring, thereby capping the opening of the GroEL channel. This is Co-chaperonin GroES from Fervidobacterium nodosum (strain ATCC 35602 / DSM 5306 / Rt17-B1).